The following is a 354-amino-acid chain: Protein-arginine kinase (354 aa).

Residues 24-254 (IVLSSRIRLA…QQIIQQEKMA (231 aa)) form the Phosphagen kinase C-terminal domain. Residues 27 to 31 (SSRIR), His-92, Arg-125, 176 to 180 (RASVM), and 207 to 212 (RGIYGE) each bind ATP. Positions 337–342 (RDYRRA) match the RDXXRA motif of the pArg binding pocket involved in allosteric regulation motif.

Belongs to the ATP:guanido phosphotransferase family.

The catalysed reaction is L-arginyl-[protein] + ATP = N(omega)-phospho-L-arginyl-[protein] + ADP + H(+). Its activity is regulated as follows. Appears to be allosterically activated by the binding of pArg-containing polypeptides to the pArg-binding pocket localized in the C-terminal domain of McsB. Its function is as follows. Catalyzes the specific phosphorylation of arginine residues in a large number of proteins. Is part of the bacterial stress response system. Protein arginine phosphorylation has a physiologically important role and is involved in the regulation of many critical cellular processes, such as protein homeostasis, motility, competence, and stringent and stress responses, by regulating gene expression and protein activity. This chain is Protein-arginine kinase, found in Bacillus thuringiensis subsp. konkukian (strain 97-27).